We begin with the raw amino-acid sequence, 570 residues long: Putative diflavin flavoprotein A 6 (570 aa).

The interval A38 to H231 is zinc metallo-hydrolase. The Flavodoxin-like domain maps to V260–K402. The flavodoxin-reductase-like stretch occupies residues V421 to Y570.

The protein in the N-terminal section; belongs to the zinc metallo-hydrolase group 3 family. This sequence in the C-terminal section; belongs to the flavodoxin reductase family. It depends on Fe cation as a cofactor.

Mediates electron transfer from NADH to oxygen, reducing it to water. This modular protein has 3 redox cofactors, in other organisms the same activity requires 2 or 3 proteins. This is Putative diflavin flavoprotein A 6 (dfa6) from Nostoc sp. (strain PCC 7120 / SAG 25.82 / UTEX 2576).